We begin with the raw amino-acid sequence, 373 residues long: GDSL esterase/lipase LIP-4 (373 aa).

A signal peptide spans 1-32 (MATLFLYSNTFSFFFITLVSLALLILRQPSRA). Ser47 functions as the Nucleophile in the catalytic mechanism. The N-linked (GlcNAc...) asparagine glycan is linked to Asn93. Residues Asp339 and His342 contribute to the active site.

The protein belongs to the 'GDSL' lipolytic enzyme family.

Its subcellular location is the secreted. This Arabidopsis thaliana (Mouse-ear cress) protein is GDSL esterase/lipase LIP-4 (LIP4).